Consider the following 1979-residue polypeptide: E3 ubiquitin-protein ligase TTC3 (1979 aa).

The interaction with POLG stretch occupies residues 1–230 (MDDFAEGGLS…RHSCMQCVKQ (230 aa)). 2 TPR repeats span residues 231-264 (GELM…RPEN) and 266-298 (LLYG…KNTW). S378 carries the phosphoserine modification. The tract at residues 422–457 (CDCHPEFLPPPSQPPRHKGKQKSRNNESEKPSFNSE) is disordered. TPR repeat units follow at residues 536-572 (VLVV…YPNE) and 576-609 (CLAY…ISRL). A disordered region spans residues 783–811 (LAQERMEEDLRESNPPKNEEPEETSDSAQ). A Phosphoserine modification is found at S1009. Disordered regions lie at residues 1021–1067 (NKGK…GPFA), 1214–1289 (QPDV…EEAK), 1402–1427 (QGSA…SSDS), 1574–1601 (KNDG…DEKT), 1757–1776 (MDSA…GSPT), 1788–1821 (KGAS…KKPS), and 1873–1927 (DEQK…PAPD). The span at 1036–1050 (VGSGAASVAPSSEAV) shows a compositional bias: low complexity. A Phosphoserine modification is found at S1060. A compositionally biased stretch (basic and acidic residues) spans 1214–1227 (QPDVKSEALSEDVK). The segment covering 1248 to 1257 (DSDSSSGSAS) has biased composition (low complexity). Positions 1576-1586 (DGFDKECEPHP) are enriched in basic and acidic residues. Composition is skewed to polar residues over residues 1788-1799 (KGASQVSPSEQS) and 1808-1821 (GQAT…KKPS). S1794 is subject to Phosphoserine. Residues 1873–1890 (DEQKKKKPNPGKDKKTSE) are compositionally biased toward basic and acidic residues. Residues 1931–1971 (CEICHEIFKSKNMRVLKCGHKFHKGCFKQWLKGQSTCPTCG) form an RING-type; atypical zinc finger.

As to quaternary structure, interacts (when phosphorylated on Ser-378) with AKT1, AKT2 and AKT3 (when phosphorylated). Interacts with CIT. Interacts with POLG. Interacts with HSP70. Interacts with SMURF2. In terms of processing, phosphorylation on Ser-378 by Akt is required for ubiquitin ligase activity. Post-translationally, proteolytically cleaved into differently sized N- and C-terminal fragments.

It localises to the nucleus. Its subcellular location is the cytoplasm. The protein localises to the golgi apparatus. It carries out the reaction S-ubiquitinyl-[E2 ubiquitin-conjugating enzyme]-L-cysteine + [acceptor protein]-L-lysine = [E2 ubiquitin-conjugating enzyme]-L-cysteine + N(6)-ubiquitinyl-[acceptor protein]-L-lysine.. It functions in the pathway protein modification; protein ubiquitination. E3 ubiquitin-protein ligase which catalyzes the formation of 'Lys-48'-polyubiquitin chains. Mediates the ubiquitination and subsequent degradation of phosphorylated Akt (AKT1, AKT2 and AKT3) in the nucleus. Acts as a terminal regulator of Akt signaling after activation; its phosphorylation by Akt, which is a prerequisite for ubiquitin ligase activity, suggests the existence of a regulation mechanism required to control Akt levels after activation. Positively regulates TGFB1-induced epithelial-mesenchymal transition and myofibroblast differentiation by mediating the ubiquitination and subsequent degradation of SMURF2. Regulates neuronal differentiation by regulating actin remodeling and Golgi organization via a signaling cascade involving RHOA, CIT and ROCK. Inhibits cell proliferation. The polypeptide is E3 ubiquitin-protein ligase TTC3 (Ttc3) (Mus musculus (Mouse)).